Consider the following 593-residue polypeptide: Cell surface glycoprotein (593 aa).

A signal peptide spans 1-22 (MRKFTLLMLLLIVISMSGIAGA). Asn-29, Asn-58, Asn-66, Asn-74, Asn-114, Asn-122, Asn-145, Asn-148, Asn-158, Asn-176, Asn-208, Asn-231, Asn-326, Asn-336, Asn-340, Asn-431, Asn-471, Asn-500, and Asn-516 each carry an N-linked (GalNAc...) asparagine glycan.

In terms of processing, N-glycosylated; contains glycans composed of methyl-Man, Man and GalNAc residues in a molar ratio of 2:3:1.

It is found in the secreted. It localises to the cell wall. The protein resides in the S-layer. Its function is as follows. The S-layer is a paracrystalline mono-layered assembly of proteins which coat the surface of the cell. The polypeptide is Cell surface glycoprotein (slgA) (Methanothermus fervidus (strain ATCC 43054 / DSM 2088 / JCM 10308 / V24 S)).